Reading from the N-terminus, the 403-residue chain is Phosphoserine phosphatase RsbP (403 aa).

The 42-residue stretch at 1-42 folds into the PAS domain; that stretch reads MDKQLNDAPCGFLALSEEGSIIAANRTLIKILDYEPEQVIGQ. The region spanning 191–402 is the PPM-type phosphatase domain; it reads QVQIDSYYNA…DDECFILVDV (212 aa).

Mn(2+) serves as cofactor.

It carries out the reaction O-phospho-L-serine + H2O = L-serine + phosphate. It catalyses the reaction O-phospho-D-serine + H2O = D-serine + phosphate. Positive regulator of sigma-B activity. Dephosphorylates RsbV in response to energy stress. The polypeptide is Phosphoserine phosphatase RsbP (rsbP) (Bacillus subtilis (strain 168)).